The primary structure comprises 66 residues: Large ribosomal subunit protein bL35 (66 aa).

Residues 1–42 are disordered; it reads MPKQKTHRASAKRFKRTANGGLKRHHAYTGHRFHGKTKKQRR.

Belongs to the bacterial ribosomal protein bL35 family.

This Lactobacillus gasseri (strain ATCC 33323 / DSM 20243 / BCRC 14619 / CIP 102991 / JCM 1131 / KCTC 3163 / NCIMB 11718 / NCTC 13722 / AM63) protein is Large ribosomal subunit protein bL35.